The chain runs to 141 residues: Hemoglobin subunit alpha (141 aa).

Residues 1–141 (VLSSADKNNI…VSTVLTSKYR (141 aa)) form the Globin domain. Ser3 is subject to Phosphoserine. An N6-succinyllysine mark is found at Lys7 and Lys11. Lys16 carries the N6-acetyllysine; alternate modification. Position 16 is an N6-succinyllysine; alternate (Lys16). A Phosphotyrosine modification is found at Tyr24. Ser35 carries the post-translational modification Phosphoserine. Position 40 is an N6-succinyllysine (Lys40). A Phosphoserine modification is found at Ser49. Residue His58 participates in O2 binding. His87 is a binding site for heme b. Phosphoserine is present on Ser102. Phosphothreonine occurs at positions 108, 134, and 137. Ser138 is subject to Phosphoserine.

This sequence belongs to the globin family. Heterotetramer of two alpha chains and two beta chains. In terms of tissue distribution, red blood cells.

In terms of biological role, involved in oxygen transport from the lung to the various peripheral tissues. Its function is as follows. Hemopressin acts as an antagonist peptide of the cannabinoid receptor CNR1. Hemopressin-binding efficiently blocks cannabinoid receptor CNR1 and subsequent signaling. The polypeptide is Hemoglobin subunit alpha (HBA) (Paguma larvata (Masked palm civet)).